Reading from the N-terminus, the 339-residue chain is Dual specificity protein phosphatase 12 (339 aa).

Residue Met1 is modified to N-acetylmethionine. Over residues 1-22 (MLEVQSSNHGCERQAPTTSPAS) the composition is skewed to polar residues. Residues 1–25 (MLEVQSSNHGCERQAPTTSPASSAG) form a disordered region. Positions 26–170 (HAVEVRPGLY…LKLYEAMGHE (145 aa)) constitute a Tyrosine-protein phosphatase domain. The active-site Phosphocysteine intermediate is the Cys114. Residue 115 to 120 (HAGVSR) participates in substrate binding. Residue Ser334 is modified to Phosphoserine.

It belongs to the protein-tyrosine phosphatase family. Non-receptor class dual specificity subfamily. In terms of assembly, monomer. The cofactor is Zn(2+).

Its subcellular location is the nucleus. It localises to the cytoplasm. The protein resides in the cytosol. The catalysed reaction is O-phospho-L-tyrosyl-[protein] + H2O = L-tyrosyl-[protein] + phosphate. The enzyme catalyses O-phospho-L-seryl-[protein] + H2O = L-seryl-[protein] + phosphate. It carries out the reaction O-phospho-L-threonyl-[protein] + H2O = L-threonyl-[protein] + phosphate. In terms of biological role, dual specificity phosphatase; can dephosphorylate both phosphotyrosine and phosphoserine or phosphothreonine residues. Can dephosphorylate glucokinase (in vitro). Has phosphatase activity with the synthetic substrate 6,8-difluoro-4-methylumbelliferyl phosphate and other in vitro substrates. The chain is Dual specificity protein phosphatase 12 (Dusp12) from Rattus norvegicus (Rat).